The sequence spans 145 residues: Protein SprT-like (145 aa).

The SprT-like domain maps to 4-140 (TNYVQEVSLA…VCGNCHGKLI (137 aa)). His-64 is a binding site for Zn(2+). Glu-65 is a catalytic residue. Zn(2+) is bound at residue His-68.

It belongs to the SprT family. Zn(2+) serves as cofactor.

It localises to the cytoplasm. The protein is Protein SprT-like of Streptococcus pyogenes serotype M6 (strain ATCC BAA-946 / MGAS10394).